Consider the following 845-residue polypeptide: Lon protease (845 aa).

In terms of domain architecture, Lon N-terminal spans 45–242 (MPILALRNMI…RLLYLLHKEL (198 aa)). 393-400 (GPPGVGKT) serves as a coordination point for ATP. The Lon proteolytic domain maps to 629 to 811 (NGDAGVVIGL…NEVLKEALLE (183 aa)). Catalysis depends on residues Ser-717 and Lys-760.

It belongs to the peptidase S16 family. In terms of assembly, homohexamer. Organized in a ring with a central cavity.

The protein resides in the cytoplasm. The enzyme catalyses Hydrolysis of proteins in presence of ATP.. Its function is as follows. ATP-dependent serine protease that mediates the selective degradation of mutant and abnormal proteins as well as certain short-lived regulatory proteins. Required for cellular homeostasis and for survival from DNA damage and developmental changes induced by stress. Degrades polypeptides processively to yield small peptide fragments that are 5 to 10 amino acids long. Binds to DNA in a double-stranded, site-specific manner. This is Lon protease from Porphyromonas gingivalis (strain ATCC 33277 / DSM 20709 / CIP 103683 / JCM 12257 / NCTC 11834 / 2561).